The chain runs to 113 residues: Molt-inhibiting hormone (113 aa).

The N-terminal stretch at 1-35 (MMSLAHSKFSCQRTRLLAVVLLAALWSSSLQQAAA) is a signal peptide. 3 disulfides stabilise this stretch: cysteine 42–cysteine 79, cysteine 59–cysteine 75, and cysteine 62–cysteine 88.

It belongs to the arthropod CHH/MIH/GIH/VIH hormone family.

Its subcellular location is the secreted. Its function is as follows. Inhibits Y-organs where molting hormone (ecdysteroid) is secreted. A molting cycle is initiated when MIH secretion diminishes or stops. This is Molt-inhibiting hormone from Callinectes sapidus (Blue crab).